The chain runs to 311 residues: VQ motif-containing protein 9 (311 aa).

Low complexity predominate over residues 1-27 (MDKSCNSSGDSSAVSASATSSTGNNTT). Positions 1–78 (MDKSCNSSGD…QINQGNLHQH (78 aa)) are disordered. The VQ motif lies at 90 to 99 (FRDVVQKLTG). 3 disordered regions span residues 103–125 (HERI…SSRL), 228–266 (QQEN…PPLF), and 290–311 (GQLG…YKGH). Over residues 240 to 249 (FPPPHPPPPS) the composition is skewed to pro residues. Residues 290–302 (GQLGFPVSPTTVP) show a composition bias toward low complexity.

In terms of assembly, interacts (via N-terminus) with WRKY8. As to expression, highly expressed in roots and at lower levels in rosette leaves, cauline leaves, stems, flowers and siliques.

The protein localises to the nucleus. Functions as a negative regulator of salt stress response. Functions as a repressor of WRKY8 transcription factor by decreasing the DNA-binding activity of WRKY8 and acts antagonistically with WRKY8 to regulate sodium and potassium homeostasis under salt stress. This chain is VQ motif-containing protein 9, found in Arabidopsis thaliana (Mouse-ear cress).